A 595-amino-acid chain; its full sequence is Potassium-transporting ATPase potassium-binding subunit (595 aa).

The next 10 membrane-spanning stretches (helical) occupy residues 9–29 (ICGYLGVLLALAKPLGSYMAA), 63–83 (TGYASAFLVFNLLGVLAVYAL), 135–155 (GLTVQNFVSAASGMAVLVALI), 177–197 (ILHILLPLSFLLALLLIGQGV), 285–305 (FLEMLAILVISGALCHTFGVM), 312–332 (GWVILAAMTLIFVPLLFVTVL), 412–432 (GLYGMLVFAIVAVFVAGLMIG), 451–471 (AIVILVPPLMVLGGTAVAVML), 516–536 (LMLGLAMWFSRYWLAVPVLAI), and 560–580 (FVGLLVGVVIIVGALTFIPAL).

This sequence belongs to the KdpA family. In terms of assembly, the system is composed of three essential subunits: KdpA, KdpB and KdpC.

The protein localises to the cell inner membrane. Its function is as follows. Part of the high-affinity ATP-driven potassium transport (or Kdp) system, which catalyzes the hydrolysis of ATP coupled with the electrogenic transport of potassium into the cytoplasm. This subunit binds the periplasmic potassium ions and delivers the ions to the membrane domain of KdpB through an intramembrane tunnel. This Methylococcus capsulatus (strain ATCC 33009 / NCIMB 11132 / Bath) protein is Potassium-transporting ATPase potassium-binding subunit.